A 394-amino-acid polypeptide reads, in one-letter code: Probable peptidoglycan glycosyltransferase FtsW (394 aa).

Topologically, residues 1–27 (MSALRSVAGLLQRWLLPARPAGLYDRQ) are cytoplasmic. Residues 28-48 (LVVLALALMAVGLVIVASASI) form a helical membrane-spanning segment. The Periplasmic portion of the chain corresponds to 49 to 64 (PEGIAINNDPFMFVKR). Residues 65 to 85 (HGLFLVMALGISWFVLQVPMA) traverse the membrane as a helical segment. The Cytoplasmic portion of the chain corresponds to 86–88 (RWQ). Residues 89 to 109 (HYNGPMLVLAILMLVLVLLVG) form a helical membrane-spanning segment. At 110-123 (RSVNGSIRWLPLGP) the chain is on the periplasmic side. A helical membrane pass occupies residues 124–144 (FNLQPAEFGKLALFVYLAGYL). The Cytoplasmic segment spans residues 145 to 154 (VRRQSEVRER). The helical transmembrane segment at 155–175 (FIGFMKPMAVLFVVAILLLAQ) threads the bilayer. A topological domain (periplasmic) is located at residue Pro-176. A helical transmembrane segment spans residues 177 to 197 (DLGSVVVMFVTSLGMLFLAGA). A topological domain (cytoplasmic) is located at residue Arg-198. The helical transmembrane segment at 199–219 (LGQFIGLILVGVSAVVTLVIA) threads the bilayer. The Periplasmic portion of the chain corresponds to 220–279 (EPYRMRRVTSFLDPWADPFGSGYQLTQSLMAFGRGSWFGEGLGNSIQKMEYLPEAHTDFV). The chain crosses the membrane as a helical span at residues 280–300 (FAILGEELGYAGVLGALFLIF). Residues 301-322 (ALSFKALKLGHQALVAERLYEG) are Cytoplasmic-facing. A helical transmembrane segment spans residues 323–343 (YLAIGIGIWFSFQTFVNVGAA). The Periplasmic segment spans residues 344 to 354 (SGMMPTKGLTL). Residues 355–375 (PLVSYGGSSLIIMMVAVSMLV) form a helical membrane-spanning segment. Over 376 to 394 (RIDFELRQASAQARVREVS) the chain is Cytoplasmic.

It belongs to the SEDS family. FtsW subfamily.

The protein localises to the cell inner membrane. It carries out the reaction [GlcNAc-(1-&gt;4)-Mur2Ac(oyl-L-Ala-gamma-D-Glu-L-Lys-D-Ala-D-Ala)](n)-di-trans,octa-cis-undecaprenyl diphosphate + beta-D-GlcNAc-(1-&gt;4)-Mur2Ac(oyl-L-Ala-gamma-D-Glu-L-Lys-D-Ala-D-Ala)-di-trans,octa-cis-undecaprenyl diphosphate = [GlcNAc-(1-&gt;4)-Mur2Ac(oyl-L-Ala-gamma-D-Glu-L-Lys-D-Ala-D-Ala)](n+1)-di-trans,octa-cis-undecaprenyl diphosphate + di-trans,octa-cis-undecaprenyl diphosphate + H(+). Its pathway is cell wall biogenesis; peptidoglycan biosynthesis. Its function is as follows. Peptidoglycan polymerase that is essential for cell division. This chain is Probable peptidoglycan glycosyltransferase FtsW, found in Aeromonas salmonicida (strain A449).